A 386-amino-acid polypeptide reads, in one-letter code: Formate-dependent phosphoribosylglycinamide formyltransferase (386 aa).

Residues 10 to 11 (EL) and glutamate 70 contribute to the N(1)-(5-phospho-beta-D-ribosyl)glycinamide site. Residues arginine 102, lysine 143, 148-153 (SSGKGQ), 183-186 (EAFV), and glutamate 191 contribute to the ATP site. Residues 107–298 (DLAAKELGLK…EFELHLRAIL (192 aa)) enclose the ATP-grasp domain. Mg(2+) is bound by residues glutamate 256 and glutamate 268. N(1)-(5-phospho-beta-D-ribosyl)glycinamide-binding positions include aspartate 275, lysine 346, and 353–354 (RR).

The protein belongs to the PurK/PurT family. In terms of assembly, homodimer.

The enzyme catalyses N(1)-(5-phospho-beta-D-ribosyl)glycinamide + formate + ATP = N(2)-formyl-N(1)-(5-phospho-beta-D-ribosyl)glycinamide + ADP + phosphate + H(+). It participates in purine metabolism; IMP biosynthesis via de novo pathway; N(2)-formyl-N(1)-(5-phospho-D-ribosyl)glycinamide from N(1)-(5-phospho-D-ribosyl)glycinamide (formate route): step 1/1. Involved in the de novo purine biosynthesis. Catalyzes the transfer of formate to 5-phospho-ribosyl-glycinamide (GAR), producing 5-phospho-ribosyl-N-formylglycinamide (FGAR). Formate is provided by PurU via hydrolysis of 10-formyl-tetrahydrofolate. This is Formate-dependent phosphoribosylglycinamide formyltransferase from Flavobacterium psychrophilum (strain ATCC 49511 / DSM 21280 / CIP 103535 / JIP02/86).